A 389-amino-acid polypeptide reads, in one-letter code: Methane monooxygenase component A beta chain (389 aa).

In terms of assembly, m.capsulatus has two forms of methane monooxygenase, a soluble and a membrane-bound type. The soluble type consists of four components (A to D): protein A, comprising three chains, in an alpha-2, beta-2, gamma-2 configuration, is a nonheme iron protein containing an unusual mu-hydroxo bridge structure at its active site and interacts with both oxygen and methane.

The enzyme catalyses methane + NADH + O2 + H(+) = methanol + NAD(+) + H2O. It catalyses the reaction methane + NADPH + O2 + H(+) = methanol + NADP(+) + H2O. Its function is as follows. Responsible for the initial oxygenation of methane to methanol in methanotrophs. It also catalyzes the monohydroxylation of a variety of unactivated alkenes, alicyclic, aromatic and heterocyclic compounds. The sequence is that of Methane monooxygenase component A beta chain (mmoY) from Methylococcus capsulatus (strain ATCC 33009 / NCIMB 11132 / Bath).